A 121-amino-acid chain; its full sequence is Surface glycoprotein CD59 homolog (121 aa).

The signal sequence occupies residues 1 to 19; that stretch reads MYILFTLVLTFVFCKPIHS. A UPAR/Ly6 domain is found at 20–104; it reads LQCYNCSHST…ENIKRTISDK (85 aa). 5 cysteine pairs are disulfide-bonded: cysteine 22-cysteine 45, cysteine 25-cysteine 32, cysteine 38-cysteine 58, cysteine 64-cysteine 82, and cysteine 83-cysteine 88. A glycan (N-linked (GlcNAc...) asparagine; by host) is linked at asparagine 24. The GPI-anchor amidated asparagine; by host moiety is linked to residue asparagine 96. Positions 97-121 are cleaved as a propeptide — removed in mature form; sequence IKRTISDKALLLLALFLVTAWNFPL.

It localises to the host cell membrane. This Saimiriine herpesvirus 2 (strain 11) (SaHV-2) protein is Surface glycoprotein CD59 homolog (15).